The following is a 393-amino-acid chain: Riboflavin biosynthesis protein RibBA (393 aa).

The tract at residues 1-200 is DHBP synthase; it reads MQFDNIDSAL…IDDLIEYRKK (200 aa). D-ribulose 5-phosphate contacts are provided by residues 27-28, D32, 139-143, and E163; these read RE and RNGHT. E28 provides a ligand contact to Mg(2+). Residue H142 coordinates Mg(2+). Positions 201-393 are GTP cyclohydrolase II; the sequence is LEPEIEFKAK…TKKIKMGHLI (193 aa). 249 to 253 contributes to the GTP binding site; that stretch reads RLHSA. Zn(2+)-binding residues include C254, C265, and C267. GTP-binding positions include Q270, 291 to 293, and T313; that span reads EGR. The active-site Proton acceptor; for GTP cyclohydrolase activity is the D325. The active-site Nucleophile; for GTP cyclohydrolase activity is the R327. GTP-binding residues include S348 and K353.

This sequence in the N-terminal section; belongs to the DHBP synthase family. In the C-terminal section; belongs to the GTP cyclohydrolase II family. The cofactor is Mg(2+). Mn(2+) is required as a cofactor. It depends on Zn(2+) as a cofactor.

The catalysed reaction is D-ribulose 5-phosphate = (2S)-2-hydroxy-3-oxobutyl phosphate + formate + H(+). The enzyme catalyses GTP + 4 H2O = 2,5-diamino-6-hydroxy-4-(5-phosphoribosylamino)-pyrimidine + formate + 2 phosphate + 3 H(+). The protein operates within cofactor biosynthesis; riboflavin biosynthesis; 2-hydroxy-3-oxobutyl phosphate from D-ribulose 5-phosphate: step 1/1. It participates in cofactor biosynthesis; riboflavin biosynthesis; 5-amino-6-(D-ribitylamino)uracil from GTP: step 1/4. Functionally, catalyzes the conversion of D-ribulose 5-phosphate to formate and 3,4-dihydroxy-2-butanone 4-phosphate. Its function is as follows. Catalyzes the conversion of GTP to 2,5-diamino-6-ribosylamino-4(3H)-pyrimidinone 5'-phosphate (DARP), formate and pyrophosphate. This is Riboflavin biosynthesis protein RibBA from Staphylococcus aureus (strain MSSA476).